The primary structure comprises 462 residues: tRNA modification GTPase MnmE (462 aa).

Residues Arg-23, Glu-88, and Arg-127 each coordinate (6S)-5-formyl-5,6,7,8-tetrahydrofolate. In terms of domain architecture, TrmE-type G spans 224–383; that stretch reads GLATVIIGRP…LEKAIADLFF (160 aa). K(+) is bound at residue Asn-234. GTP is bound by residues 234–239, 253–259, and 278–281; these read NVGKSS, TDIPGTT, and DTAG. Residue Ser-238 coordinates Mg(2+). Thr-253, Ile-255, and Thr-258 together coordinate K(+). Thr-259 provides a ligand contact to Mg(2+). Lys-462 contacts (6S)-5-formyl-5,6,7,8-tetrahydrofolate.

The protein belongs to the TRAFAC class TrmE-Era-EngA-EngB-Septin-like GTPase superfamily. TrmE GTPase family. In terms of assembly, homodimer. Heterotetramer of two MnmE and two MnmG subunits. K(+) serves as cofactor.

Its subcellular location is the cytoplasm. Exhibits a very high intrinsic GTPase hydrolysis rate. Involved in the addition of a carboxymethylaminomethyl (cmnm) group at the wobble position (U34) of certain tRNAs, forming tRNA-cmnm(5)s(2)U34. The protein is tRNA modification GTPase MnmE of Geobacillus thermodenitrificans (strain NG80-2).